The sequence spans 1160 residues: MDINHQNQCIPYNCLSNPDAILLDAERLETGNTVADISLGLINFLYSNFVPGGGFIVGLLELIWGFVGPSQWEIFLAQIEQLISQRIEEFARNQAISRLEGLSNNYEIYTETFRAWEKDPSNPALREEMRTQFNVMNSALIAAIPLLRVRNYEVALLSVYVQAANLHLSVLRDVSVYGQRWGFDPATVNSRYSDLTRLIHVYTDHCVDTYNDGLKNLEGSRLSDWVVYNRFRRRLTISVLDIIAFFPNYDIEAYPIQTASQLTREVYLDLPFVNETLSPPASYPTFSAAESAIIRSPHLVDFLNSFTIYTDSLASYAYWGGHLVNSFRTGTTTNLIRSPLYGREGNTERPVTISASPSVPIFRTLSYFTGLNNNNPVAGIEGVEFQNTISRSIYRKSGPIDSFSELPPQDVSVSPAIGYSHRLCHATFLERISGPRIAGTVFSWTHRSASPINEVSPSRITQIPWVKAHTLASGASVIKGPGFTGGDILTRNSMGDLGALRVTFTGRLPQSYYIRFRYASVANRSGTFRYSQPPSYGISFPKTMDAGEALTSRSFAHTTLFTPITFSRAQEEFDLYIQSGVYIDRIEFIPVDATFESEINLERAQKAVNALFTSTNQLGLKTDVTDYHIDQVSNLVECLSDEFCLDEKRELSEKVKHAKRLSDERNLLQDPNFRGINRQPDRGWRGSTDITIQGGDDVFKENYVTLTGTFDECYPTYLYQKIDESKLKAYTRYQLRGYIEDSQDLEIYLIRYNAKHEIVNVPGTGSLWPLSVQSPIGKCGEPNRCAPHLEWNPDLDCSCRDEEKCAHHSHHFSLDIDVGCTDLNEDLGVWVIFKIKTQDGHARLGNLEFLEEKPLVGEALARVKRAEKKWRDKREKLELETNIVYKEAKESVDALFVNSQYDQLQADTNIAMIHAADKRVHSIREAYLPELSVIPGVNAGIFEELEGRIFTAYSLYDARNVIKNGDFNNGLSCWNVKGHVDVEEQNNHRSVLVVPEWEAEVSQEVRVCPGRGYILRVTAYKEGYGEGCVTIHEVDNNTDELKFSNCEKEQVYPGNTVACNDYNKNHGANACSSRNRGYDESYESNSSIPADYAPVYEEEAYTDGQRGNPCEFNRGHTPLPAGYVTAELEYFPETDTVWVEIGETEGTFIVDSVELLLMEE.

The protein belongs to the delta endotoxin family.

Functionally, promotes colloidosmotic lysis by binding to the midgut epithelial cells of insects. This is Pesticidal crystal protein Cry1Db (cry1Db) from Bacillus thuringiensis.